The chain runs to 662 residues: Transcription activator of gluconeogenesis NECHADRAFT_59099 (662 aa).

Positions M1 to K61 are disordered. 2 stretches are compositionally biased toward basic and acidic residues: residues T25–T34 and T43–R56. Residues C66 to C94 constitute a DNA-binding region (zn(2)-C6 fungal-type). Disordered stretches follow at residues L105 to N149, Y502 to P524, and Y580 to V606. 2 stretches are compositionally biased toward polar residues: residues Y121–T130 and S137–N149. One can recognise a PAS domain in the interval T448–G519. Over residues A582–S593 the composition is skewed to basic and acidic residues.

This sequence belongs to the ERT1/acuK family.

The protein resides in the nucleus. Transcription factor which regulates nonfermentable carbon utilization. Activator of gluconeogenetic genes. This chain is Transcription activator of gluconeogenesis NECHADRAFT_59099, found in Fusarium vanettenii (strain ATCC MYA-4622 / CBS 123669 / FGSC 9596 / NRRL 45880 / 77-13-4) (Fusarium solani subsp. pisi).